The chain runs to 415 residues: Gamma-glutamyl phosphate reductase (415 aa).

The protein belongs to the gamma-glutamyl phosphate reductase family.

It localises to the cytoplasm. It carries out the reaction L-glutamate 5-semialdehyde + phosphate + NADP(+) = L-glutamyl 5-phosphate + NADPH + H(+). It functions in the pathway amino-acid biosynthesis; L-proline biosynthesis; L-glutamate 5-semialdehyde from L-glutamate: step 2/2. Catalyzes the NADPH-dependent reduction of L-glutamate 5-phosphate into L-glutamate 5-semialdehyde and phosphate. The product spontaneously undergoes cyclization to form 1-pyrroline-5-carboxylate. The polypeptide is Gamma-glutamyl phosphate reductase (Clostridium perfringens (strain SM101 / Type A)).